A 506-amino-acid polypeptide reads, in one-letter code: Maturase K (506 aa).

Belongs to the intron maturase 2 family. MatK subfamily.

The protein localises to the plastid. The protein resides in the chloroplast. In terms of biological role, usually encoded in the trnK tRNA gene intron. Probably assists in splicing its own and other chloroplast group II introns. The sequence is that of Maturase K from Ocimum basilicum (Sweet basil).